The sequence spans 230 residues: Sugar fermentation stimulation protein homolog (230 aa).

This sequence belongs to the SfsA family.

The sequence is that of Sugar fermentation stimulation protein homolog from Pyrococcus furiosus (strain ATCC 43587 / DSM 3638 / JCM 8422 / Vc1).